Here is a 1052-residue protein sequence, read N- to C-terminus: MIKKIMKMAKIYKSKNAMIDAVPVIDRESKMFLQYPVNSNGCCNFTVIDKDKDFFSNIKSTKSNSKFLQEMFIDGTKRKPYLDIEHYYPSEKEFKKDFKRIIPQIVNDIIQVFAKEYDQVIKLSDVLLLNSSGQSSDGYKLSVHVVVSPKNKTFYYTNSKKIENNTAYHLYASLININSEYKDKENFNDKPHGYLDEQVYRKDATLRMIGSCKYPTGDRCLDPIDSKTLEKLDLTDKQKLNYLISYIDDTKPTILLETPIIQQTTISKTKIQHNEPTKTNINNKLLDLVKKYHPSAKQYGSSKEGYYNFNYDNRTEKCPLSGVTHDSNGFYVIEKSSGCFLKCYSKKCHGKSMHLGYVDETDQFVDEAHQINTKYLLQDPLVPKLLEDWINKGKTFAIKSAMGTGKTYLIKHILDKYKLNKVLWITHRQTLTKSLYGSFKDYGFVSYMDTQNCLYQYDKVLVQIDSLMRIKEFDMFENKQLVKKYDLVIIDEIEGCLSHYESPYLNKPDIDSRYIFNFMIDVIRFSNKLIVLDADISIRTQLFIEHIDKITNKGGNYIMINNSYQPITKTFTITNDEGDFDTKLFADIKAKKNICVVSMSAGAVNKIAVELNKMGTKYVSHTSKSNDSLKKNLEDVNNFWKQQQVVMFSPSIISGIDFNEIHFDKMYCIIKSGNKTCDPRSFLQMVGRIRHLGDQNIFCWYQQIPIFIDKTNKIIPKLQSDVYTFDDLLSYYRYYETLRNKKIIKNVVYETVEGDDVISFVNKSVEIDLFDKISLHNEVEQLNKHQDVFLTVLNRLIMRAGNKIDFKLVLKDDKKPIMDKINNREEEINIMIDLDDSKYDIKELSTKQTNNQLTEIEKLFIKKYYFKKKLGIKKEIDKDKLRELMTKYMDKEYFIERYEILFGYKKISDSNDDSKTKEKDRIKRKIIVDFVNILIGKHYNNCLNDSKLKRIIIKDDQYSKALKKIIKESMYFSNEEKYRPLFRKKKGSLKSNPKKEKEIQFYTSTLVRLLREYNIILKVESRKKTNGKSSYLRSLSVDKQIKDVVENKYNHQ.

A Helicase ATP-binding domain is found at 389-561 (WINKGKTFAI…NKGGNYIMIN (173 aa)). 400-407 (SAMGTGKT) contributes to the ATP binding site.

This sequence belongs to the mimivirus R1 family.

This is an uncharacterized protein from Acanthamoeba polyphaga mimivirus (APMV).